The following is a 355-amino-acid chain: 45 kDa calcium-binding protein (355 aa).

Residues 1-29 form the signal peptide; the sequence is MASRQAPLCGLAPCCLWLLGVVLLMNASA. Asn33 carries N-linked (GlcNAc...) asparagine glycosylation. EF-hand domains are found at residues 91-126 and 130-165; these read KSRR…KTAE and EAVA…TKGH. Ser92 is modified (phosphoserine). Asp104, Asn106, Asp108, Arg110, Glu115, Asp143, Asp145, Asp147, His149, and Glu154 together coordinate Ca(2+). A phosphothreonine mark is found at Thr186 and Thr210. EF-hand domains follow at residues 226-261, 271-306, and 307-342; these read MLQF…TVEN, WVRD…MNEF, and SALN…FTGS. Ca(2+) is bound by residues Asp239, Asp241, Asp243, Lys245, and Glu250. Residue Thr258 is modified to Phosphothreonine. Asp284, Asn286, and Asp288 together coordinate Ca(2+). Thr292 carries the post-translational modification Phosphothreonine. Positions 295, 320, 322, 324, 326, and 331 each coordinate Ca(2+). Residues 302–355 are necessary for intracellular retention in Golgi apparatus lumen; the sequence is PMNEFSALNEAKQMIAIADENQNHYLEPEEVLKYSEFFTGSKLVDYARSVHEEF.

The protein belongs to the CREC family.

Its subcellular location is the golgi apparatus lumen. Functionally, may regulate calcium-dependent activities in the endoplasmic reticulum lumen or post-ER compartment. The sequence is that of 45 kDa calcium-binding protein (SDF4) from Bos taurus (Bovine).